The following is a 93-amino-acid chain: Probable Fe(2+)-trafficking protein (93 aa).

It belongs to the Fe(2+)-trafficking protein family.

In terms of biological role, could be a mediator in iron transactions between iron acquisition and iron-requiring processes, such as synthesis and/or repair of Fe-S clusters in biosynthetic enzymes. The polypeptide is Probable Fe(2+)-trafficking protein (Acidithiobacillus ferrooxidans (strain ATCC 23270 / DSM 14882 / CIP 104768 / NCIMB 8455) (Ferrobacillus ferrooxidans (strain ATCC 23270))).